The chain runs to 316 residues: Sideroflexin-4 (316 aa).

The next 5 helical transmembrane spans lie at 83–103 (QVFLPISAPLVVGSLIAHKGI), 141–161 (LLILGAVSYSTVTGALPQIIL), 174–194 (ICRSFLPVPLAAGLAAFNILV), 230–250 (ISRATLFGTTAALPTFLMALL), and 263–283 (IAPIGSMCTVITFGLMIPVSF).

The protein belongs to the sideroflexin family.

The protein localises to the mitochondrion inner membrane. In terms of biological role, mitochondrial amino-acid transporter. Does not act as a serine transporter: not able to mediate transport of serine into mitochondria. In Danio rerio (Zebrafish), this protein is Sideroflexin-4.